Reading from the N-terminus, the 413-residue chain is MSNVSGILETAGVPLVSANWPQPSPPPAVPAGPQMDHMGNSSQGAPWLFLTSALARGVSGIFVWTALVLTCHQIYLHLRSYTVPQEQRYIIRLLLIVPIYAFDSWLSLLLLGDHQYYVYFDSVRDCYEAFVIYSFLSLCFQYLGGEGAIMAEIRGKPIKSSCLYGTCCLRGMTYSIGFLRFCKQATLQFCLVKPVMAVTTIILQAFGKYHDGDFNVRSGYLYVTLIYNASVSLALYALFLFYFTTRELLRPFQPVLKFLTIKAVIFLSFWQGLLLAILERCGVIPEVETSGGNKLGAGTLAAGYQNFIICVEMLFASVALRYAFPCQVYAEKKENSPAPPAPMQSISSGIRETVSPQDIVQDAIHNFSPAYQHYTQQATHEAPRPGTHPSGGSGGSRKSRSLEKRMLIPSEDL.

A run of 7 helical transmembrane segments spans residues 47–69, 93–113, 130–150, 187–207, 223–243, 258–278, and 300–320; these read WLFL…ALVL, LLLI…LLGD, FVIY…GAIM, LQFC…QAFG, VTLI…LFYF, FLTI…LAIL, and LAAG…SVAL. The disordered stretch occupies residues 372–413; that stretch reads QHYTQQATHEAPRPGTHPSGGSGGSRKSRSLEKRMLIPSEDL.

Belongs to the TMEM184 family. Expressed in vascular cells (at protein level).

It localises to the cell membrane. Its subcellular location is the cytoplasm. The protein resides in the perinuclear region. It is found in the cytoplasmic vesicle membrane. The protein localises to the early endosome membrane. It localises to the endosome. Its subcellular location is the cytoplasmic vesicle. The protein resides in the secretory vesicle membrane. Functionally, acts as a heparin receptor in vascular cells. May be involved in vesicle transport in exocrine cells and Sertoli cells. This Homo sapiens (Human) protein is Transmembrane protein 184A (TMEM184A).